Consider the following 206-residue polypeptide: Thymidylate kinase (206 aa).

Gly-11 to Thr-18 provides a ligand contact to ATP.

It belongs to the thymidylate kinase family.

It carries out the reaction dTMP + ATP = dTDP + ADP. Phosphorylation of dTMP to form dTDP in both de novo and salvage pathways of dTTP synthesis. This chain is Thymidylate kinase, found in Burkholderia ambifaria (strain MC40-6).